An 884-amino-acid polypeptide reads, in one-letter code: Probable inorganic carbon transporter subunit DabA (884 aa).

Zn(2+) is bound by residues C390, D392, H582, and C597.

This sequence belongs to the inorganic carbon transporter (TC 9.A.2) DabA family. Forms a complex with DabB. Requires Zn(2+) as cofactor.

It is found in the cell membrane. Its function is as follows. Part of an energy-coupled inorganic carbon pump. This is Probable inorganic carbon transporter subunit DabA from Staphylococcus saprophyticus subsp. saprophyticus (strain ATCC 15305 / DSM 20229 / NCIMB 8711 / NCTC 7292 / S-41).